The following is a 140-amino-acid chain: Protein SNA4 (140 aa).

Over methionine 1–cysteine 8 the chain is Cytoplasmic. S-palmitoyl cysteine attachment occurs at residues cysteine 2, cysteine 3, cysteine 5, cysteine 7, and cysteine 8. A helical transmembrane segment spans residues threonine 9–leucine 29. Residues arginine 30 to asparagine 41 are Vacuolar-facing. The helical transmembrane segment at valine 42–isoleucine 62 threads the bilayer. Topologically, residues threonine 63–proline 140 are cytoplasmic. The tract at residues arginine 84–proline 140 is disordered. A compositionally biased stretch (polar residues) spans asparagine 85 to arginine 108. Lysine 128 is covalently cross-linked (Glycyl lysine isopeptide (Lys-Gly) (interchain with G-Cter in ubiquitin)). Serine 134 bears the Phosphoserine mark.

Belongs to the UPF0057 (PMP3) family.

It localises to the vacuole membrane. The sequence is that of Protein SNA4 (SNA4) from Saccharomyces cerevisiae (strain ATCC 204508 / S288c) (Baker's yeast).